The primary structure comprises 122 residues: UPF0102 protein R00337 (122 aa).

It belongs to the UPF0102 family.

This chain is UPF0102 protein R00337, found in Rhizobium meliloti (strain 1021) (Ensifer meliloti).